The sequence spans 569 residues: Mitochondrial import receptor subunit tomm-70 (569 aa).

At 1–12 (MVETTGISDQTK) the chain is on the mitochondrial intermembrane side. The chain crosses the membrane as a helical span at residues 13-32 (KVLIGVAAAATVAGVGYLVY). Residues 33-569 (KSFGGSDLER…KRAAEMLDMY (537 aa)) are Cytoplasmic-facing. TPR repeat units follow at residues 44–77 (LEEI…AGPN), 119–152 (TKAY…DSSL), 221–254 (DQKQ…PPAM), and 510–544 (LHLL…APPR).

This sequence belongs to the Tom70 family. In terms of assembly, forms part of the preprotein translocase complex of the outer mitochondrial membrane (TOM complex). As to expression, expressed in body wall muscle cells, the pharynx and structures in the tail.

The protein localises to the mitochondrion outer membrane. Receptor that accelerates the import of all mitochondrial precursor proteins. The chain is Mitochondrial import receptor subunit tomm-70 from Caenorhabditis elegans.